A 303-amino-acid polypeptide reads, in one-letter code: Dehydrodolichyl diphosphate synthase 1 (303 aa).

The helical transmembrane segment at 14–34 (LLFLFLIPCLFITSYIGFPVF) threads the bilayer.

Belongs to the UPP synthase family. It depends on Mg(2+) as a cofactor. In terms of tissue distribution, expressed in low levels in the whole plant. Preferentially expressed in roots.

It is found in the endoplasmic reticulum membrane. The catalysed reaction is n isopentenyl diphosphate + (2E,6E)-farnesyl diphosphate = a di-trans,poly-cis-polyprenyl diphosphate + n diphosphate. It functions in the pathway protein modification; protein glycosylation. Functionally, catalyzes cis-prenyl chain elongation to produce the polyprenyl backbone of dolichol, a glycosyl carrier-lipid required for the biosynthesis of several classes of glycoprotein. This chain is Dehydrodolichyl diphosphate synthase 1 (DPS), found in Arabidopsis thaliana (Mouse-ear cress).